The chain runs to 321 residues: tRNA dimethylallyltransferase (321 aa).

Residue 25–32 (GPTASGKS) participates in ATP binding. 27–32 (TASGKS) serves as a coordination point for substrate. An interaction with substrate tRNA region spans residues 50-53 (DSMQ).

Belongs to the IPP transferase family. As to quaternary structure, monomer. It depends on Mg(2+) as a cofactor.

It carries out the reaction adenosine(37) in tRNA + dimethylallyl diphosphate = N(6)-dimethylallyladenosine(37) in tRNA + diphosphate. Functionally, catalyzes the transfer of a dimethylallyl group onto the adenine at position 37 in tRNAs that read codons beginning with uridine, leading to the formation of N6-(dimethylallyl)adenosine (i(6)A). The protein is tRNA dimethylallyltransferase of Rhodopseudomonas palustris (strain ATCC BAA-98 / CGA009).